The sequence spans 375 residues: Dual-specificity RNA methyltransferase RlmN (375 aa).

Glutamate 98 (proton acceptor) is an active-site residue. The region spanning 106-346 is the Radical SAM core domain; it reads GGKRRTLCVS…VRTTRGDDID (241 aa). A disulfide bridge links cysteine 113 with cysteine 349. Positions 120, 124, and 127 each coordinate [4Fe-4S] cluster. S-adenosyl-L-methionine is bound by residues 174 to 175, serine 206, 228 to 230, and asparagine 306; these read GE and SLH. Cysteine 349 (S-methylcysteine intermediate) is an active-site residue.

This sequence belongs to the radical SAM superfamily. RlmN family. [4Fe-4S] cluster serves as cofactor.

The protein resides in the cytoplasm. It carries out the reaction adenosine(2503) in 23S rRNA + 2 reduced [2Fe-2S]-[ferredoxin] + 2 S-adenosyl-L-methionine = 2-methyladenosine(2503) in 23S rRNA + 5'-deoxyadenosine + L-methionine + 2 oxidized [2Fe-2S]-[ferredoxin] + S-adenosyl-L-homocysteine. The enzyme catalyses adenosine(37) in tRNA + 2 reduced [2Fe-2S]-[ferredoxin] + 2 S-adenosyl-L-methionine = 2-methyladenosine(37) in tRNA + 5'-deoxyadenosine + L-methionine + 2 oxidized [2Fe-2S]-[ferredoxin] + S-adenosyl-L-homocysteine. Specifically methylates position 2 of adenine 2503 in 23S rRNA and position 2 of adenine 37 in tRNAs. m2A2503 modification seems to play a crucial role in the proofreading step occurring at the peptidyl transferase center and thus would serve to optimize ribosomal fidelity. The protein is Dual-specificity RNA methyltransferase RlmN of Chromohalobacter salexigens (strain ATCC BAA-138 / DSM 3043 / CIP 106854 / NCIMB 13768 / 1H11).